Reading from the N-terminus, the 825-residue chain is Outer dense fiber protein 2 (825 aa).

Residues V22, K37, S68, and S69 each carry the phosphoserine modification. The interval 27-46 (LPKPSAASSQKSHKRGMKGD) is disordered. T87 carries the post-translational modification Phosphothreonine. S90 bears the Phosphoserine; by TSSK4 mark. Residues S101 and S104 each carry the phosphoserine modification. T105 is modified (phosphothreonine). Residues S110 and S124 each carry the phosphoserine modification. Residue K133 forms a Glycyl lysine isopeptide (Lys-Gly) (interchain with G-Cter in SUMO2) linkage. Phosphoserine is present on S134. Residues 139-212 (QKGERQMAKR…MSKLVEAEMD (74 aa)) are a coiled coil. T226 is subject to Phosphothreonine. Coiled-coil stretches lie at residues 240–418 (DINT…AEQL) and 456–793 (EIIV…NYVQ). S256 and S627 each carry phosphoserine. The interaction with BBOF1 stretch occupies residues 532-696 (KNYEGMIDNY…EAIHQAQLRL (165 aa)).

Belongs to the ODF2 family. In terms of assembly, self-associates. Associates with microtubules and forms a fibrillar structure partially linked to the microtubule network. Interacts through its C-terminus with PLK1. Interacts with ODF1. Interacts with MARK4; the interaction is required for localization of ODF2 to centrioles. Interacts with TSSK4. Interacts with AKNA. Interacts with QRICH2. Interacts with CFAP58. Interacts with BBOF1. Interacts with CCDC38. Interacts with CCDC42. In terms of processing, tyrosine phosphorylated. Phosphorylated on Ser-90 by TSSK4. In terms of tissue distribution, testis-specific. Expressed in the proximal compartment of the elongated spermatid tail; later expression progresses to the distal spermatid tail compartment located in the lumen of the seminiferous epithelium. In spermatids (stages II-III) expression of the tails peaks and remains strong during the remaining steps of spermiogenesis (at protein level). Expression correlates with the onset of spermatogenesis and is first detected at 30 days. Higher expression is seen in testis of 40-day-old and adults that are older than 50 days. No expression is seen in 10- and 20-day-old testes.

It is found in the cytoplasm. Its subcellular location is the cytoskeleton. The protein resides in the microtubule organizing center. The protein localises to the centrosome. It localises to the cell projection. It is found in the cilium. Its subcellular location is the centriole. The protein resides in the spindle pole. The protein localises to the flagellum. Its function is as follows. Seems to be a major component of sperm tail outer dense fibers (ODF). ODFs are filamentous structures located on the outside of the axoneme in the midpiece and principal piece of the mammalian sperm tail and may help to maintain the passive elastic structures and elastic recoil of the sperm tail. May have a modulating influence on sperm motility. Functions as a general scaffold protein that is specifically localized at the distal/subdistal appendages of mother centrioles. Component of the centrosome matrix required for the localization of PLK1 and NIN to the centrosomes. Required for the formation and/or maintenance of normal CETN1 assembly. The polypeptide is Outer dense fiber protein 2 (Odf2) (Rattus norvegicus (Rat)).